A 574-amino-acid chain; its full sequence is 2-succinyl-5-enolpyruvyl-6-hydroxy-3-cyclohexene-1-carboxylate synthase (574 aa).

Belongs to the TPP enzyme family. MenD subfamily. As to quaternary structure, homodimer. Requires Mg(2+) as cofactor. It depends on Mn(2+) as a cofactor. Thiamine diphosphate serves as cofactor.

It catalyses the reaction isochorismate + 2-oxoglutarate + H(+) = 5-enolpyruvoyl-6-hydroxy-2-succinyl-cyclohex-3-ene-1-carboxylate + CO2. Its pathway is quinol/quinone metabolism; 1,4-dihydroxy-2-naphthoate biosynthesis; 1,4-dihydroxy-2-naphthoate from chorismate: step 2/7. The protein operates within cofactor biosynthesis; phylloquinone biosynthesis. Catalyzes the thiamine diphosphate-dependent decarboxylation of 2-oxoglutarate and the subsequent addition of the resulting succinic semialdehyde-thiamine pyrophosphate anion to isochorismate to yield 2-succinyl-5-enolpyruvyl-6-hydroxy-3-cyclohexene-1-carboxylate (SEPHCHC). This is 2-succinyl-5-enolpyruvyl-6-hydroxy-3-cyclohexene-1-carboxylate synthase from Synechococcus sp. (strain RCC307).